Here is a 226-residue protein sequence, read N- to C-terminus: Thiamine-phosphate synthase (226 aa).

4-amino-2-methyl-5-(diphosphooxymethyl)pyrimidine contacts are provided by residues 46 to 50 (QLRDK) and Asn87. The Mg(2+) site is built by Asp88 and Asp107. Ser126 lines the 4-amino-2-methyl-5-(diphosphooxymethyl)pyrimidine pocket. 2-[(2R,5Z)-2-carboxy-4-methylthiazol-5(2H)-ylidene]ethyl phosphate is bound at residue 152–154 (TPT). A 4-amino-2-methyl-5-(diphosphooxymethyl)pyrimidine-binding site is contributed by Lys155. Gly183 lines the 2-[(2R,5Z)-2-carboxy-4-methylthiazol-5(2H)-ylidene]ethyl phosphate pocket.

Belongs to the thiamine-phosphate synthase family. Mg(2+) is required as a cofactor.

It catalyses the reaction 2-[(2R,5Z)-2-carboxy-4-methylthiazol-5(2H)-ylidene]ethyl phosphate + 4-amino-2-methyl-5-(diphosphooxymethyl)pyrimidine + 2 H(+) = thiamine phosphate + CO2 + diphosphate. The catalysed reaction is 2-(2-carboxy-4-methylthiazol-5-yl)ethyl phosphate + 4-amino-2-methyl-5-(diphosphooxymethyl)pyrimidine + 2 H(+) = thiamine phosphate + CO2 + diphosphate. The enzyme catalyses 4-methyl-5-(2-phosphooxyethyl)-thiazole + 4-amino-2-methyl-5-(diphosphooxymethyl)pyrimidine + H(+) = thiamine phosphate + diphosphate. The protein operates within cofactor biosynthesis; thiamine diphosphate biosynthesis; thiamine phosphate from 4-amino-2-methyl-5-diphosphomethylpyrimidine and 4-methyl-5-(2-phosphoethyl)-thiazole: step 1/1. Condenses 4-methyl-5-(beta-hydroxyethyl)thiazole monophosphate (THZ-P) and 2-methyl-4-amino-5-hydroxymethyl pyrimidine pyrophosphate (HMP-PP) to form thiamine monophosphate (TMP). The chain is Thiamine-phosphate synthase from Mycobacterium sp. (strain KMS).